A 409-amino-acid polypeptide reads, in one-letter code: Argininosuccinate synthase (409 aa).

Residues 15-23 and A42 contribute to the ATP site; that span reads AYSGGLDTS. Positions 93 and 98 each coordinate L-citrulline. G123 is an ATP binding site. L-aspartate contacts are provided by T125, N129, and D130. N129 lines the L-citrulline pocket. The L-citrulline site is built by R133, S182, S191, E267, and Y279.

The protein belongs to the argininosuccinate synthase family. Type 1 subfamily. In terms of assembly, homotetramer.

Its subcellular location is the cytoplasm. It catalyses the reaction L-citrulline + L-aspartate + ATP = 2-(N(omega)-L-arginino)succinate + AMP + diphosphate + H(+). Its pathway is amino-acid biosynthesis; L-arginine biosynthesis; L-arginine from L-ornithine and carbamoyl phosphate: step 2/3. This chain is Argininosuccinate synthase, found in Desulfitobacterium hafniense (strain Y51).